We begin with the raw amino-acid sequence, 393 residues long: Succinate--CoA ligase [ADP-forming] subunit beta (393 aa).

The ATP-grasp domain maps to 9–251; that stretch reads KALFEKFGVL…LNEEDPKEIE (243 aa). ATP is bound by residues Lys-46, 53-55, Ser-109, and Glu-114; that span reads GRG. Positions 206 and 220 each coordinate Mg(2+). Substrate-binding positions include Asn-271 and 328–330; that span reads GIM.

It belongs to the succinate/malate CoA ligase beta subunit family. Heterotetramer of two alpha and two beta subunits. Mg(2+) is required as a cofactor.

The enzyme catalyses succinate + ATP + CoA = succinyl-CoA + ADP + phosphate. It catalyses the reaction GTP + succinate + CoA = succinyl-CoA + GDP + phosphate. It participates in carbohydrate metabolism; tricarboxylic acid cycle; succinate from succinyl-CoA (ligase route): step 1/1. Succinyl-CoA synthetase functions in the citric acid cycle (TCA), coupling the hydrolysis of succinyl-CoA to the synthesis of either ATP or GTP and thus represents the only step of substrate-level phosphorylation in the TCA. The beta subunit provides nucleotide specificity of the enzyme and binds the substrate succinate, while the binding sites for coenzyme A and phosphate are found in the alpha subunit. The protein is Succinate--CoA ligase [ADP-forming] subunit beta of Opitutus terrae (strain DSM 11246 / JCM 15787 / PB90-1).